The sequence spans 97 residues: Integration host factor subunit alpha (97 aa).

This sequence belongs to the bacterial histone-like protein family. In terms of assembly, heterodimer of an alpha and a beta chain.

In terms of biological role, this protein is one of the two subunits of integration host factor, a specific DNA-binding protein that functions in genetic recombination as well as in transcriptional and translational control. The polypeptide is Integration host factor subunit alpha (Histophilus somni (strain 2336) (Haemophilus somnus)).